The following is a 295-amino-acid chain: uncharacterized protein (295 aa).

A Sigma-54 factor interaction domain is found at 4–233 (IVVKSMAMEK…LQNTIERLVL (230 aa)).

This is an uncharacterized protein from Pseudomonas sp. (strain NS671).